The primary structure comprises 269 residues: tRNA pseudouridine synthase A (269 aa).

Asp-51 acts as the Nucleophile in catalysis. Residue Tyr-109 coordinates substrate.

Belongs to the tRNA pseudouridine synthase TruA family. As to quaternary structure, homodimer.

The catalysed reaction is uridine(38/39/40) in tRNA = pseudouridine(38/39/40) in tRNA. Functionally, formation of pseudouridine at positions 38, 39 and 40 in the anticodon stem and loop of transfer RNAs. The protein is tRNA pseudouridine synthase A of Histophilus somni (strain 2336) (Haemophilus somnus).